We begin with the raw amino-acid sequence, 146 residues long: Hemoglobin subunit beta (146 aa).

The Globin domain maps to 2-146 (HWSAEEKQLI…VAHALARKYH (145 aa)). Heme b is bound by residues His-63 and His-92.

Belongs to the globin family. Heterotetramer of two alpha chains and two beta chains. Red blood cells.

Functionally, involved in oxygen transport from the lung to the various peripheral tissues. This is Hemoglobin subunit beta (HBB) from Anseranas semipalmata (Magpie goose).